An 852-amino-acid chain; its full sequence is MILSVFFYMFLLHIRRLDCFVAVQDSKTLFKGSTLINDSHGETLVSAGQRFELGFFTPNGSSDERRYLGIWFYNLHPLTVVWVANRESPVLDRSCIFTISKDGNLEVIDSKGRVYWDTGVKPSSVSAERMVKLMDNGNLVLISDGNEANVVWQSFQNPTDTFLPGMRMDENMTLSSWRSFNDPSHGNFTFQMDQEEDKQFIIWKRSMRYWKSGISGKFIGSDEMPYAISYFLSNFTETVTVHNASVPPLFTSLYTNTRFTMSSSGQAQYFRLDGERFWAQIWAEPRDECSVYNACGNFGSCNSKNEEMCKCLPGFRPNFLEKWVKGDFSGGCSRESRICGKDGVVVGDMFLNLSVVEVGSPDSQFDAHNEKECRAECLNNCQCQAYSYEEVDILQSNTKCWIWLEDLNNLKEGYLGSRNVFIRVAVPDIGSHVERGRGRYGEAKTPVVLIIVVTFTSAAILVVLSSTASYVFLQRRKVNKELGSIPRGVHLCDSERHIKELIESGRFKQDDSQGIDVPSFELETILYATSNFSNANKLGQGGFGPVYKGMFPGDQEIAVKRLSRCSGQGLEEFKNEVVLIAKLQHRNLVRLLGYCVAGEEKLLLYEYMPHKSLDFFIFDRKLCQRLDWKMRCNIILGIARGLLYLHQDSRLRIIHRDLKTSNILLDEEMNPKISDFGLARIFGGSETSANTNRVVGTYGYMSPEYALEGLFSFKSDVFSFGVVVIETISGKRNTGFHEPEKSLSLLGHAWDLWKAERGIELLDQALQESCETEGFLKCLNVGLLCVQEDPNDRPTMSNVVFMLGSSEAATLPTPKQPAFVLRRCPSSSKASSSTKPETCSENELTITLEDGR.

The N-terminal stretch at 1–19 (MILSVFFYMFLLHIRRLDC) is a signal peptide. The Bulb-type lectin domain maps to 20-154 (FVAVQDSKTL…GNEANVVWQS (135 aa)). Residues 20 to 444 (FVAVQDSKTL…RGRGRYGEAK (425 aa)) are Extracellular-facing. Residues Asn-37, Asn-59, Asn-171, Asn-187, Asn-234, and Asn-243 are each glycosylated (N-linked (GlcNAc...) asparagine). The EGF-like domain occupies 285-321 (PRDECSVYNACGNFGSCNSKNEEMCKCLPGFRPNFLE). 2 cysteine pairs are disulfide-bonded: Cys-289–Cys-301 and Cys-295–Cys-309. A PAN domain is found at 339-426 (CGKDGVVVGD…SRNVFIRVAV (88 aa)). Asn-352 carries an N-linked (GlcNAc...) asparagine glycan. Cystine bridges form between Cys-373–Cys-400 and Cys-377–Cys-383. The chain crosses the membrane as a helical span at residues 445-465 (TPVVLIIVVTFTSAAILVVLS). Residues 466–852 (STASYVFLQR…ELTITLEDGR (387 aa)) are Cytoplasmic-facing. The Protein kinase domain occupies 532–819 (FSNANKLGQG…TLPTPKQPAF (288 aa)). Residues 538–546 (LGQGGFGPV) and Lys-560 each bind ATP. Position 566 is a phosphoserine (Ser-566). The interval 621 to 638 (KLCQRLDWKMRCNIILGI) is caM-binding. Catalysis depends on Asp-657, which acts as the Proton acceptor. Residues Ser-661 and Ser-674 each carry the phosphoserine modification. Phosphothreonine is present on Thr-691. Residues 826–852 (SSSKASSSTKPETCSENELTITLEDGR) are disordered. Ser-831 and Ser-840 each carry phosphoserine. Residues 834–845 (TKPETCSENELT) show a composition bias toward polar residues. Thr-847 is modified (phosphothreonine).

It belongs to the protein kinase superfamily. Ser/Thr protein kinase family.

The protein localises to the cell membrane. It catalyses the reaction L-seryl-[protein] + ATP = O-phospho-L-seryl-[protein] + ADP + H(+). The enzyme catalyses L-threonyl-[protein] + ATP = O-phospho-L-threonyl-[protein] + ADP + H(+). This chain is G-type lectin S-receptor-like serine/threonine-protein kinase At4g03230, found in Arabidopsis thaliana (Mouse-ear cress).